Consider the following 514-residue polypeptide: 2,3-bisphosphoglycerate-independent phosphoglycerate mutase (514 aa).

Residues D14 and S64 each coordinate Mn(2+). S64 serves as the catalytic Phosphoserine intermediate. Residues H125, 155–156 (RD), R187, R193, 263–266 (RADR), and K336 each bind substrate. Mn(2+) is bound by residues D403, H407, D444, H445, and H463.

The protein belongs to the BPG-independent phosphoglycerate mutase family. Monomer. It depends on Mn(2+) as a cofactor.

It carries out the reaction (2R)-2-phosphoglycerate = (2R)-3-phosphoglycerate. It participates in carbohydrate degradation; glycolysis; pyruvate from D-glyceraldehyde 3-phosphate: step 3/5. In terms of biological role, catalyzes the interconversion of 2-phosphoglycerate and 3-phosphoglycerate. The chain is 2,3-bisphosphoglycerate-independent phosphoglycerate mutase from Escherichia coli O6:H1 (strain CFT073 / ATCC 700928 / UPEC).